Reading from the N-terminus, the 303-residue chain is Pyridoxal 5'-phosphate synthase subunit PdxS (303 aa).

A D-ribose 5-phosphate-binding site is contributed by aspartate 33. Lysine 90 functions as the Schiff-base intermediate with D-ribose 5-phosphate in the catalytic mechanism. Glycine 162 contacts D-ribose 5-phosphate. Position 174 (arginine 174) interacts with D-glyceraldehyde 3-phosphate. D-ribose 5-phosphate contacts are provided by residues glycine 223 and 244–245 (GS).

It belongs to the PdxS/SNZ family. In terms of assembly, in the presence of PdxT, forms a dodecamer of heterodimers.

The enzyme catalyses aldehydo-D-ribose 5-phosphate + D-glyceraldehyde 3-phosphate + L-glutamine = pyridoxal 5'-phosphate + L-glutamate + phosphate + 3 H2O + H(+). It functions in the pathway cofactor biosynthesis; pyridoxal 5'-phosphate biosynthesis. In terms of biological role, catalyzes the formation of pyridoxal 5'-phosphate from ribose 5-phosphate (RBP), glyceraldehyde 3-phosphate (G3P) and ammonia. The ammonia is provided by the PdxT subunit. Can also use ribulose 5-phosphate and dihydroxyacetone phosphate as substrates, resulting from enzyme-catalyzed isomerization of RBP and G3P, respectively. In Mycolicibacterium smegmatis (strain ATCC 700084 / mc(2)155) (Mycobacterium smegmatis), this protein is Pyridoxal 5'-phosphate synthase subunit PdxS.